A 379-amino-acid polypeptide reads, in one-letter code: Chaperone protein DnaJ (379 aa).

One can recognise a J domain in the interval 5–70; sequence DYYEVLGVEK…QKRAAYDQYG (66 aa). The CR-type zinc finger occupies 133–211; sequence GKSVEIRVPT…CHGQGRVEKT (79 aa). Residues Cys-146, Cys-149, Cys-163, Cys-166, Cys-185, Cys-188, Cys-199, and Cys-202 each coordinate Zn(2+). CXXCXGXG motif repeat units lie at residues 146-153, 163-170, 185-192, and 199-206; these read CDTCDGSG, CTTCHGQG, CPTCGGKG, and CDVCHGQG.

It belongs to the DnaJ family. In terms of assembly, homodimer. It depends on Zn(2+) as a cofactor.

It is found in the cytoplasm. In terms of biological role, participates actively in the response to hyperosmotic and heat shock by preventing the aggregation of stress-denatured proteins and by disaggregating proteins, also in an autonomous, DnaK-independent fashion. Unfolded proteins bind initially to DnaJ; upon interaction with the DnaJ-bound protein, DnaK hydrolyzes its bound ATP, resulting in the formation of a stable complex. GrpE releases ADP from DnaK; ATP binding to DnaK triggers the release of the substrate protein, thus completing the reaction cycle. Several rounds of ATP-dependent interactions between DnaJ, DnaK and GrpE are required for fully efficient folding. Also involved, together with DnaK and GrpE, in the DNA replication of plasmids through activation of initiation proteins. The chain is Chaperone protein DnaJ from Pseudoalteromonas atlantica (strain T6c / ATCC BAA-1087).